The chain runs to 317 residues: Pantothenate kinase (317 aa).

Residue Gly-99–Ser-106 participates in ATP binding.

This sequence belongs to the prokaryotic pantothenate kinase family.

The protein localises to the cytoplasm. It catalyses the reaction (R)-pantothenate + ATP = (R)-4'-phosphopantothenate + ADP + H(+). It functions in the pathway cofactor biosynthesis; coenzyme A biosynthesis; CoA from (R)-pantothenate: step 1/5. This Histophilus somni (strain 2336) (Haemophilus somnus) protein is Pantothenate kinase.